We begin with the raw amino-acid sequence, 283 residues long: MSSNPSSVEKKLLHYTGKAIADFNMIQRGDRVMVCLSGGKDSFTLLTILNQLRIKSGNKFEIFAFTLDQAQPGWNDACLRQWLAEKSIPHEILTRDTYSIVKEKIPEGKTYCSLCSRLRRGIIYRYAEENGFNKIALGHHRDDLVRTLMMSILYNGDIRSMPPKLLSDNKKHIVIRPLCYVQEKDIITFASEQAFPIIPCNLCGSQENLMRKKVASLIDQLAIENPKVPSNMLHALQSLKPSQLMDQNFWNFKNLEDGLETTQSIQCEEVFNAQEFELEDEKI.

A PP-loop motif motif is present at residues 37 to 42 (SGGKDS). Residues Cys-112, Cys-115, and Cys-203 each coordinate [4Fe-4S] cluster.

Belongs to the TtcA family. In terms of assembly, homodimer. The cofactor is Mg(2+). [4Fe-4S] cluster is required as a cofactor.

Its subcellular location is the cytoplasm. It catalyses the reaction cytidine(32) in tRNA + S-sulfanyl-L-cysteinyl-[cysteine desulfurase] + AH2 + ATP = 2-thiocytidine(32) in tRNA + L-cysteinyl-[cysteine desulfurase] + A + AMP + diphosphate + H(+). The protein operates within tRNA modification. Its function is as follows. Catalyzes the ATP-dependent 2-thiolation of cytidine in position 32 of tRNA, to form 2-thiocytidine (s(2)C32). The sulfur atoms are provided by the cysteine/cysteine desulfurase (IscS) system. The sequence is that of tRNA-cytidine(32) 2-sulfurtransferase from Legionella pneumophila subsp. pneumophila (strain Philadelphia 1 / ATCC 33152 / DSM 7513).